Consider the following 364-residue polypeptide: MKKQDFYFDLPEELIAQDPLEDRSGSRLLVLDKNTGKVTHHIFKEIVKYLKKGDCLVLNNTKVIPARLMGERIIEKTPLAPGHSYGKEGTPIELLLLKRKPDDVWETLVRPGKKAKVGTKISFGDGKLIGEIIDVVEEGNRLVKFTYQGIFEEILDELGQMPLPPYITHELADKNRYQTVYAKHEGSAAAPTAGLHFTNELLKQIEDMGVVIANVTLHVGLGTFRPVKEDDILDHHMHSEVYQVEESEAKKINDAKRAGGRIICVGTTSCRTIESAANEDGFVQAKSGATEIFIYPGYKFKVLNCLITNFHLPESTLLMLVSALASREHIIAAYEEAVKERYRFFSFGDAMFITDNIIETKDTF.

Belongs to the QueA family. As to quaternary structure, monomer.

It localises to the cytoplasm. It catalyses the reaction 7-aminomethyl-7-carbaguanosine(34) in tRNA + S-adenosyl-L-methionine = epoxyqueuosine(34) in tRNA + adenine + L-methionine + 2 H(+). The protein operates within tRNA modification; tRNA-queuosine biosynthesis. Functionally, transfers and isomerizes the ribose moiety from AdoMet to the 7-aminomethyl group of 7-deazaguanine (preQ1-tRNA) to give epoxyqueuosine (oQ-tRNA). This chain is S-adenosylmethionine:tRNA ribosyltransferase-isomerase, found in Lachnoclostridium phytofermentans (strain ATCC 700394 / DSM 18823 / ISDg) (Clostridium phytofermentans).